The sequence spans 557 residues: Protein PECTIC ARABINOGALACTAN SYNTHESIS-RELATED (557 aa).

The disordered stretch occupies residues 1-54 (MAELRHSSSLGSRSSSSPLRAAGDEDSSSPHVHDHSPNGGDDEDGRPRHPSRDR). Over 1–79 (MAELRHSSSL…DPRVSPQKNK (79 aa)) the chain is Cytoplasmic. Residues 7 to 20 (SSSLGSRSSSSPLR) show a composition bias toward low complexity. The segment covering 45–54 (GRPRHPSRDR) has biased composition (basic and acidic residues). The helical; Signal-anchor for type II membrane protein transmembrane segment at 80–100 (ISLLLILILAIASLISVYGII) threads the bilayer. Residues 101–557 (NHLNAPYLCK…NPLTPCMCKA (457 aa)) are Lumenal-facing. Asn-156, Asn-188, and Asn-324 each carry an N-linked (GlcNAc...) asparagine glycan. 336-338 (HLR) serves as a coordination point for substrate. A glycan (N-linked (GlcNAc...) asparagine) is linked at Asn-375.

This sequence belongs to the glycosyltransferase GT106 family. Widely expressed with the highest expression in reproductive tissues and roots.

It is found in the golgi apparatus membrane. It participates in glycan metabolism; pectin biosynthesis. Functionally, glycosyltransferase involved in the biosynthesis of pectic type-II arabinogalactans. This is Protein PECTIC ARABINOGALACTAN SYNTHESIS-RELATED from Arabidopsis thaliana (Mouse-ear cress).